A 586-amino-acid chain; its full sequence is Proteasome-associated ATPase (586 aa).

A coiled-coil region spans residues 11–76; it reads AWRELEAVRA…LREEVDRLGQ (66 aa). Residue 273-278 coordinates ATP; the sequence is GCGKTL. Residues 585-586 are docks into pockets in the proteasome alpha-ring; sequence YL.

Belongs to the AAA ATPase family. Homohexamer. Assembles into a hexameric ring structure that caps the 20S proteasome core. Strongly interacts with the prokaryotic ubiquitin-like protein Pup through a hydrophobic interface; the interacting region of ARC lies in its N-terminal coiled-coil domain. There is one Pup binding site per ARC hexamer ring. Upon ATP-binding, the C-terminus of ARC interacts with the alpha-rings of the proteasome core, possibly by binding to the intersubunit pockets.

It functions in the pathway protein degradation; proteasomal Pup-dependent pathway. Its function is as follows. ATPase which is responsible for recognizing, binding, unfolding and translocation of pupylated proteins into the bacterial 20S proteasome core particle. May be essential for opening the gate of the 20S proteasome via an interaction with its C-terminus, thereby allowing substrate entry and access to the site of proteolysis. Thus, the C-termini of the proteasomal ATPase may function like a 'key in a lock' to induce gate opening and therefore regulate proteolysis. In Nocardia farcinica (strain IFM 10152), this protein is Proteasome-associated ATPase.